Reading from the N-terminus, the 421-residue chain is Acyl-coenzyme A thioesterase 6 (421 aa).

Catalysis depends on charge relay system residues S232, D326, and H360. A Peroxisome targeting signal motif is present at residues 419 to 421 (SKI).

The protein belongs to the C/M/P thioester hydrolase family.

The protein resides in the peroxisome. The protein localises to the cytoplasm. It carries out the reaction pristanoyl-CoA + H2O = 2,6,10,14-tetramethylpentadecanoate + CoA + H(+). The enzyme catalyses phytanoyl-CoA + H2O = 3,7,11,15-tetramethylhexadecanoate + CoA + H(+). Its pathway is lipid metabolism; fatty acid metabolism. In terms of biological role, catalyzes the hydrolysis of acyl-CoAs into free fatty acids and coenzyme A (CoASH), regulating their respective intracellular levels. Catalyzes the hydrolysis of phytanoyl-CoA and pristanoyl-CoA, two methyl-branched fatty acids derived from phytol, that enter the body via the diet. The protein is Acyl-coenzyme A thioesterase 6 of Homo sapiens (Human).